A 543-amino-acid polypeptide reads, in one-letter code: Probable protein kinase UbiB (543 aa).

The Protein kinase domain maps to D123–L501. ATP-binding positions include L129–V137 and K152. D287 functions as the Proton acceptor in the catalytic mechanism. 2 helical membrane passes run S498–G518 and D519–W539.

This sequence belongs to the ABC1 family. UbiB subfamily.

It is found in the cell inner membrane. The protein operates within cofactor biosynthesis; ubiquinone biosynthesis [regulation]. Its function is as follows. Is probably a protein kinase regulator of UbiI activity which is involved in aerobic coenzyme Q (ubiquinone) biosynthesis. In Serratia proteamaculans (strain 568), this protein is Probable protein kinase UbiB.